The primary structure comprises 426 residues: 3-phosphoshikimate 1-carboxyvinyltransferase (426 aa).

Residues lysine 22, serine 23, and arginine 27 each contribute to the 3-phosphoshikimate site. Residue lysine 22 coordinates phosphoenolpyruvate. The phosphoenolpyruvate site is built by glycine 96 and arginine 124. 3-phosphoshikimate contacts are provided by serine 170, serine 171, glutamine 172, serine 198, aspartate 314, asparagine 337, and lysine 341. Phosphoenolpyruvate is bound at residue glutamine 172. Residue aspartate 314 is the Proton acceptor of the active site. Residues arginine 345, arginine 387, and lysine 412 each coordinate phosphoenolpyruvate.

The protein belongs to the EPSP synthase family. In terms of assembly, monomer.

Its subcellular location is the cytoplasm. The catalysed reaction is 3-phosphoshikimate + phosphoenolpyruvate = 5-O-(1-carboxyvinyl)-3-phosphoshikimate + phosphate. The protein operates within metabolic intermediate biosynthesis; chorismate biosynthesis; chorismate from D-erythrose 4-phosphate and phosphoenolpyruvate: step 6/7. Its function is as follows. Catalyzes the transfer of the enolpyruvyl moiety of phosphoenolpyruvate (PEP) to the 5-hydroxyl of shikimate-3-phosphate (S3P) to produce enolpyruvyl shikimate-3-phosphate and inorganic phosphate. The polypeptide is 3-phosphoshikimate 1-carboxyvinyltransferase (Shewanella baltica (strain OS155 / ATCC BAA-1091)).